Here is a 244-residue protein sequence, read N- to C-terminus: Large ribosomal subunit protein uL30 (244 aa).

Belongs to the universal ribosomal protein uL30 family.

The protein is Large ribosomal subunit protein uL30 (RPL7) of Candida glabrata (strain ATCC 2001 / BCRC 20586 / JCM 3761 / NBRC 0622 / NRRL Y-65 / CBS 138) (Yeast).